The sequence spans 857 residues: Blue light receptor lreA (857 aa).

PAS domains lie at 306-328 (IIYVSEAFERLTGYTEQEIVGQN), 479-542 (LVEN…TTTD), and 608-642 (LSKSGIVLFMTSKARPVLGRMPDELIGKSLQDLMD). The segment at 811–836 (CAICQTKKTPEWRRGPSGERDLCNSC) adopts a GATA-type zinc-finger fold.

Transcription factor that acts as a blue light sensor. Plays crucial roles in fungal growth and asexual development. Involved in conidiophore formation, sclerotium production, and conidial stress tolerance. Promotes conidiation by inducing the expression of brlA and abaA. Positively regulates the fungal pathogenicity towards maize. In blue light conditions, inhibits aflatoxin B1 (AFB1) biosynthesis by down-regulating the expression of key genes such as aflA, aflJ, aflH, aflO and aflK. In Aspergillus flavus, this protein is Blue light receptor lreA.